The chain runs to 942 residues: Zinc finger protein 865 (942 aa).

The interval 66-106 is disordered; that stretch reads FASTSTSKPKEFKVEAPPSSSLSPSKKPDIATTQQFNNQPP. Residues 96–106 show a composition bias toward polar residues; sequence ATTQQFNNQPP. 20 C2H2-type zinc fingers span residues 172–194, 200–222, 282–304, 310–332, 338–360, 367–389, 466–488, 494–516, 522–544, 564–586, 592–614, 678–700, 706–728, 734–756, 762–784, 790–812, 818–840, 846–868, 874–896, and 902–924; these read FPCT…MLVH, YECN…RRCH, FTCT…QIIH, FSCS…VKTH, VQCE…QATH, YKCE…KQVH, FCCN…ERIH, HQCS…HVVH, YKCE…KQIH, FGCT…KELH, YVCD…KLVH, FSCS…KYVH, LACN…RRTH, FTCS…QRCH, YRCT…KVVH, YKCA…QRLH, QRCP…QRVH, YRCD…QRSH, LRCS…VQTH, and FKCG…RHAH.

It belongs to the krueppel C2H2-type zinc-finger protein family.

It is found in the nucleus. May be involved in transcriptional regulation. The polypeptide is Zinc finger protein 865 (znf865) (Xenopus tropicalis (Western clawed frog)).